A 295-amino-acid polypeptide reads, in one-letter code: Large ribosomal subunit protein uL29m (295 aa).

The protein belongs to the universal ribosomal protein uL29 family. In terms of assembly, component of the mitochondrial large ribosomal subunit. Mature mitochondrial ribosomes consist of a small (37S) and a large (54S) subunit. The 37S subunit contains at least 33 different proteins and 1 molecule of RNA (15S). The 54S subunit contains at least 45 different proteins and 1 molecule of RNA (21S).

The protein localises to the mitochondrion. The polypeptide is Large ribosomal subunit protein uL29m (MRPL4) (Meyerozyma guilliermondii (strain ATCC 6260 / CBS 566 / DSM 6381 / JCM 1539 / NBRC 10279 / NRRL Y-324) (Yeast)).